Reading from the N-terminus, the 66-residue chain is Large ribosomal subunit protein bL33c (66 aa).

Belongs to the bacterial ribosomal protein bL33 family.

Its subcellular location is the plastid. The protein localises to the chloroplast. The protein is Large ribosomal subunit protein bL33c of Saccharum officinarum (Sugarcane).